Here is a 208-residue protein sequence, read N- to C-terminus: Troponin I, cardiac muscle (208 aa).

Disordered stretches follow at residues 1–37 (MAEE…KISA), 54–74 (DLER…GELC), and 168–208 (VRKD…GGQS). Residue Ala-2 is modified to N-acetylalanine. Positions 28-73 (HAKRQSKISASRKLQLKTLLLQRAKRDLEREEQERAGEKQRHLGEL) are involved in binding TNC. Basic and acidic residues-rich tracts occupy residues 54–71 (DLER…RHLG) and 168–187 (VRKD…RKNV).

Belongs to the troponin I family. As to quaternary structure, binds to actin and tropomyosin.

Its function is as follows. Troponin I is the inhibitory subunit of troponin, the thin filament regulatory complex which confers calcium-sensitivity to striated muscle actomyosin ATPase activity. This Coturnix japonica (Japanese quail) protein is Troponin I, cardiac muscle (TNNI3).